Consider the following 119-residue polypeptide: Large ribosomal subunit protein uL22 (119 aa).

It belongs to the universal ribosomal protein uL22 family. As to quaternary structure, part of the 50S ribosomal subunit.

Its function is as follows. This protein binds specifically to 23S rRNA; its binding is stimulated by other ribosomal proteins, e.g. L4, L17, and L20. It is important during the early stages of 50S assembly. It makes multiple contacts with different domains of the 23S rRNA in the assembled 50S subunit and ribosome. In terms of biological role, the globular domain of the protein is located near the polypeptide exit tunnel on the outside of the subunit, while an extended beta-hairpin is found that lines the wall of the exit tunnel in the center of the 70S ribosome. This chain is Large ribosomal subunit protein uL22, found in Rickettsia peacockii (strain Rustic).